The sequence spans 724 residues: Semaphorin-2A (724 aa).

The first 25 residues, 1-25 (MSLLQLSPLLALLLLLCSSVSETAA), serve as a signal peptide directing secretion. Positions 45–522 (QGNNNYGKHG…TDHRIKQIDL (478 aa)) constitute a Sema domain. A glycan (N-linked (GlcNAc...) asparagine) is linked at asparagine 95. Cysteine 118 and cysteine 129 are oxidised to a cystine. Asparagine 163, asparagine 190, asparagine 229, and asparagine 314 each carry an N-linked (GlcNAc...) asparagine glycan. 2 disulfides stabilise this stretch: cysteine 291/cysteine 399 and cysteine 315/cysteine 358. N-linked (GlcNAc...) asparagine glycosylation is present at asparagine 401. 2 cysteine pairs are disulfide-bonded: cysteine 525–cysteine 541 and cysteine 535–cysteine 550. The Ig-like C2-type domain maps to 552 to 663 (PYELDLLQDV…LCSYNITVDA (112 aa)). Asparagine 563 carries an N-linked (GlcNAc...) asparagine glycan. A disulfide bond links cysteine 590 and cysteine 647. Residues asparagine 658, asparagine 670, and asparagine 708 are each glycosylated (N-linked (GlcNAc...) asparagine).

It belongs to the semaphorin family. Interacts with PlexB. In terms of tissue distribution, transiently expressed by a single large muscle during motoneuron outgrowth and synapse formation.

It is found in the secreted. Its function is as follows. Ligand for transmembrane receptor PlexB. Plays a role in growth cone guidance. Required for both proper adult behavior and survival. Can function as a selective target-derived signal that inhibits the formation of specific synaptic terminal arbors. Function in neurons is essential for adult survival, motor neuron survival, and is important for climbing behavior and activity. During embryogenesis, plays an important role in correct salivary gland positioning. This is Semaphorin-2A from Drosophila melanogaster (Fruit fly).